A 254-amino-acid polypeptide reads, in one-letter code: Isoprenyl transferase (254 aa).

Asp-34 is an active-site residue. Position 34 (Asp-34) interacts with Mg(2+). Substrate is bound by residues 35–38 (GNGR), Trp-39, Arg-47, His-51, and 79–81 (STE). The active-site Proton acceptor is the Asn-82. Substrate contacts are provided by residues Trp-83, Arg-85, Arg-202, and 208–210 (RIS). Residue Glu-221 coordinates Mg(2+).

Belongs to the UPP synthase family. As to quaternary structure, homodimer. The cofactor is Mg(2+).

Its function is as follows. Catalyzes the condensation of isopentenyl diphosphate (IPP) with allylic pyrophosphates generating different type of terpenoids. The protein is Isoprenyl transferase of Staphylococcus saprophyticus subsp. saprophyticus (strain ATCC 15305 / DSM 20229 / NCIMB 8711 / NCTC 7292 / S-41).